A 117-amino-acid chain; its full sequence is Protein OPG035 (117 aa).

The protein belongs to the poxviridae OPG035 family.

Functionally, bcl-2-like protein which contributes to virulence by preventing host NF-kappa-B activation in response to pro-inflammatory stimuli such as TNF-alpha or IL1B. This Monkeypox virus protein is Protein OPG035 (OPG035).